The chain runs to 177 residues: CASP-like protein 4D1 (177 aa).

At 1-20 (MTAPTAPSMAAPPAPSMVSR) the chain is on the cytoplasmic side. Residues 21 to 41 (MTALFLRVLTFAFLMVSLVIM) traverse the membrane as a helical segment. Topologically, residues 42-66 (TTNTGTIEIGIDEFKVRSKDFYSYR) are extracellular. A helical membrane pass occupies residues 67–87 (YMLAAIAFGLTYTILQIALTL). Topologically, residues 88-107 (NHISKRNGAQTSGDGNLVFD) are cytoplasmic. Residues 108–128 (FYGDKVVSYILATGAAAAFGA) traverse the membrane as a helical segment. The Extracellular portion of the chain corresponds to 129–153 (TKELKTQLAGLGGDKFFNKGYASAS). Residues 154–174 (LLLLGFVCTAILSVFSSYALP) traverse the membrane as a helical segment. Residues 175–177 (KKV) are Cytoplasmic-facing.

The protein belongs to the Casparian strip membrane proteins (CASP) family. As to quaternary structure, homodimer and heterodimers.

The protein resides in the cell membrane. This Populus trichocarpa (Western balsam poplar) protein is CASP-like protein 4D1.